A 390-amino-acid chain; its full sequence is Guanine nucleotide exchange factor for Rab-3A (390 aa).

Positions 1–60 are disordered; that stretch reads MWSGQPHPDEGHPPPLEAVPVPWKSVGPCKSHRESLGGLPETPAGEEAQGEEGPAATQLD. Positions 40-58 are enriched in low complexity; that stretch reads PETPAGEEAQGEEGPAATQ. A coiled-coil region spans residues 73–161; that stretch reads EKGSEFLKEE…AEVTALKTLV (89 aa). Residues 166 to 194 form a disordered region; the sequence is PASPNRELHPQLLSPTKAGPRKGHLRHKS. 2 positions are modified to phosphoserine: Ser168 and Ser179. Basic residues predominate over residues 184 to 194; sequence GPRKGHLRHKS.

The protein belongs to the SEC2 family. In terms of assembly, interacts with RAB3A and IHPK1 through the coiled-coil domain. This interaction is competitive. IHPK1 kinase activity is not required for this interaction.

Guanine nucleotide exchange factor (GEF) which may activate RAB3A, a GTPase that regulates synaptic vesicle exocytosis. Promotes the exchange of GDP to GTP, converting inactive GDP-bound Rab proteins into their active GTP-bound form. May also activate RAB8A and RAB8B. The chain is Guanine nucleotide exchange factor for Rab-3A (RAB3IL1) from Bos taurus (Bovine).